We begin with the raw amino-acid sequence, 103 residues long: Large ribosomal subunit protein bL21 (103 aa).

The protein belongs to the bacterial ribosomal protein bL21 family. In terms of assembly, part of the 50S ribosomal subunit. Contacts protein L20.

This protein binds to 23S rRNA in the presence of protein L20. This Photobacterium profundum (strain SS9) protein is Large ribosomal subunit protein bL21.